Consider the following 105-residue polypeptide: Thioredoxin (105 aa).

A Thioredoxin domain is found at 1 to 105 (MVNNVTDSSF…SLLDWINKSI (105 aa)). C30 and C33 are oxidised to a cystine.

The protein belongs to the thioredoxin family.

Functionally, component of the thioredoxin-thioredoxin reductase system. Participates in various redox reactions through the reversible oxidation of its active center dithiol to a disulfide and catalyzes dithiol-disulfide exchange reactions. The sequence is that of Thioredoxin (trxA) from Rickettsia prowazekii (strain Madrid E).